The chain runs to 622 residues: Chaperone protein HscA homolog (622 aa).

This sequence belongs to the heat shock protein 70 family.

Its function is as follows. Chaperone involved in the maturation of iron-sulfur cluster-containing proteins. Has a low intrinsic ATPase activity which is markedly stimulated by HscB. This chain is Chaperone protein HscA homolog, found in Burkholderia multivorans (strain ATCC 17616 / 249).